Here is a 364-residue protein sequence, read N- to C-terminus: Mannonate dehydratase (364 aa).

Belongs to the mannonate dehydratase family. It depends on Fe(2+) as a cofactor. Requires Mn(2+) as cofactor.

The enzyme catalyses D-mannonate = 2-dehydro-3-deoxy-D-gluconate + H2O. Its pathway is carbohydrate metabolism; pentose and glucuronate interconversion. In terms of biological role, catalyzes the dehydration of D-mannonate. The chain is Mannonate dehydratase from Endomicrobium trichonymphae.